Reading from the N-terminus, the 510-residue chain is Serine/threonine protein phosphatase 2A 59 kDa regulatory subunit B' eta isoform (510 aa).

Positions 1-87 are disordered; it reads MWKQILSKLP…NNNNNNNNGV (87 aa). The span at 10 to 19 shows a compositional bias: basic residues; sequence PNKKSSKHEH. Residues 27 to 42 show a composition bias toward low complexity; the sequence is HSSSSSHTSGASTSKS.

It belongs to the phosphatase 2A regulatory subunit B56 family. PP2A consists of a common heteromeric enzyme, composed of a catalytic subunit (subunits C), a constant regulatory subunit (subunit A), and a variety of regulatory subunits such as subunits B (the R2/B/PR55/B55, R3/B''/PR72/PR130/PR59 and R5/B'/B56 families). Interacts with BZR1. Interacts with BRI1.

The protein localises to the nucleus. Its subcellular location is the nucleolus. The protein resides in the cytoplasm. Functionally, the B regulatory subunit may modulate substrate selectivity and catalytic activity, and may also direct the localization of the catalytic enzyme to a particular subcellular compartment. The holoenzyme composed of PP2AA1, PP2A4 and B'ETA acts as negative regulator of plant innate immunity by controlling BAK1 phosphorylation state and activation in surface-localized immune receptor complexes. Required for the formation of the PP2A holoenzyme that negatively regulates brassinosteroid signaling by dephosphorylating and inactivating BRI1 in the cytoplasm. This Arabidopsis thaliana (Mouse-ear cress) protein is Serine/threonine protein phosphatase 2A 59 kDa regulatory subunit B' eta isoform (B'ETA).